Here is a 70-residue protein sequence, read N- to C-terminus: uncharacterized protein (70 aa).

This is an uncharacterized protein from Sinorhizobium fredii (strain NBRC 101917 / NGR234).